A 147-amino-acid chain; its full sequence is Arginine vasopressin-induced protein 1 (147 aa).

2 disordered regions span residues 1–24 (MGTPASVVSEPPPWQAPIEARGRK) and 104–147 (LANP…QIRH). Polar residues predominate over residues 105 to 119 (ANPQSATETASSEQY). Positions 121-134 (HSRKKSARIRRNWR) are enriched in basic residues. Residues 137–147 (GPTSYLHQIRH) show a composition bias toward polar residues.

In terms of biological role, may be involved in MAP kinase activation, epithelial sodium channel (ENaC) down-regulation and cell cycling. In Homo sapiens (Human), this protein is Arginine vasopressin-induced protein 1 (AVPI1).